The following is a 164-amino-acid chain: Phosphopantetheine adenylyltransferase (164 aa).

Residue Ser9 coordinates substrate. ATP contacts are provided by residues 9-10 (SF) and His17. Lys41, Leu73, and Lys87 together coordinate substrate. ATP is bound by residues 88–90 (GLR), Glu98, and 122–128 (YSYLSSS).

It belongs to the bacterial CoaD family. In terms of assembly, homohexamer. It depends on Mg(2+) as a cofactor.

It is found in the cytoplasm. It carries out the reaction (R)-4'-phosphopantetheine + ATP + H(+) = 3'-dephospho-CoA + diphosphate. The protein operates within cofactor biosynthesis; coenzyme A biosynthesis; CoA from (R)-pantothenate: step 4/5. In terms of biological role, reversibly transfers an adenylyl group from ATP to 4'-phosphopantetheine, yielding dephospho-CoA (dPCoA) and pyrophosphate. This is Phosphopantetheine adenylyltransferase from Rhodococcus opacus (strain B4).